A 189-amino-acid chain; its full sequence is Elongation factor P (189 aa).

It belongs to the elongation factor P family.

It is found in the cytoplasm. The protein operates within protein biosynthesis; polypeptide chain elongation. In terms of biological role, involved in peptide bond synthesis. Stimulates efficient translation and peptide-bond synthesis on native or reconstituted 70S ribosomes in vitro. Probably functions indirectly by altering the affinity of the ribosome for aminoacyl-tRNA, thus increasing their reactivity as acceptors for peptidyl transferase. In Sinorhizobium fredii (strain NBRC 101917 / NGR234), this protein is Elongation factor P.